The sequence spans 104 residues: Large ribosomal subunit protein bL21 (104 aa).

Belongs to the bacterial ribosomal protein bL21 family. As to quaternary structure, part of the 50S ribosomal subunit. Contacts protein L20.

In terms of biological role, this protein binds to 23S rRNA in the presence of protein L20. The protein is Large ribosomal subunit protein bL21 of Rhodopirellula baltica (strain DSM 10527 / NCIMB 13988 / SH1).